We begin with the raw amino-acid sequence, 300 residues long: MSIRSLGYLRIEATDMAAWREYGLKVLGMVEGKGAPEGALYLRMDDFPARLVVVPGEHDRLLEAGWECANAEGLQEIRNRLDLEGTPYKEATAAELADRRVDEMIRFADPSGNCLEVFHGTALEHRRVVSPYGHRFVTGEQGMGHVVLSTRDDAEALHFYRDVLGFRLRDSMRLPPQMVGRPADGPPAWLRFFGCNPRHHSLAFLPMPTSSGIVHLMVEVEQADDVGLCLDRALRRKVPMSATLGRHVNDLMLSFYMKTPGGFDIEFGCEGRQVDDRDWIARESTAVSLWGHDFTVGARG.

VOC domains are found at residues 5–120 (SLGY…VFHG) and 142–270 (GMGH…FGCE). His-145 contacts Fe cation. 4 residues coordinate substrate: His-200, His-215, Asp-250, and Tyr-256. Position 215 (His-215) interacts with Fe cation. Glu-266 provides a ligand contact to Fe cation.

The protein belongs to the extradiol ring-cleavage dioxygenase family. Homodimer, but may form a homooctamer. The cofactor is Fe(2+).

It catalyses the reaction 3,4-dihydroxy-9,10-secoandrosta-1,3,5(10)-triene-9,17-dione + O2 = (1E,2Z)-3-hydroxy-5,9,17-trioxo-4,5:9,10-disecoandrosta-1(10),2-dien-4-oate + H(+). It participates in steroid metabolism; cholesterol metabolism. Functionally, catalyzes the meta-cleavage of 3,4-dihydroxy-9,10-seconandrost-1,3,5(10)-triene-9,17-dione (3,4-DHSA) to produce 4,5-9,10-diseco-3-hydroxy-5,9,17-trioxoandrosta-1(10),2-diene-4-oic acid (4,9-DSHA). This Mycobacterium tuberculosis (strain CDC 1551 / Oshkosh) protein is Iron-dependent extradiol dioxygenase (hsaC).